The chain runs to 254 residues: Mitochondrial inner membrane protease ATP23 homolog (254 aa).

The segment at 1 to 32 (MAQSGAKAADLSREPPGEQKPSPSSRQNEEDL) is disordered. A divalent metal cation is bound at residue His-133. Glu-134 is an active-site residue. Residue His-137 coordinates a divalent metal cation.

Belongs to the peptidase M76 family.

The polypeptide is Mitochondrial inner membrane protease ATP23 homolog (atp23) (Danio rerio (Zebrafish)).